The chain runs to 206 residues: RNA pyrophosphohydrolase (206 aa).

Positions 6–149 constitute a Nudix hydrolase domain; sequence GYRPNVGIVL…KRGVYARALR (144 aa). A Nudix box motif is present at residues 38–59; sequence GGMNTDETPVEAMYRELQEETG. Positions 175–206 are disordered; that stretch reads MPGHTAGHDRPRKRPRTRGYWPKKATGDGPAS.

It belongs to the Nudix hydrolase family. RppH subfamily. A divalent metal cation is required as a cofactor.

In terms of biological role, accelerates the degradation of transcripts by removing pyrophosphate from the 5'-end of triphosphorylated RNA, leading to a more labile monophosphorylated state that can stimulate subsequent ribonuclease cleavage. The sequence is that of RNA pyrophosphohydrolase from Stenotrophomonas maltophilia (strain K279a).